Consider the following 329-residue polypeptide: MSFAAGLLNATVQAATVLLLAGLGELISERAGVLNLGVEGMMLVGALGGFVVTAVTGNYWLGFGVGIACGMALAAVHAFLCISLKSNQVISGVMLTLLGTGLTTFFGSGWVQESITGFPQMTFPIVGRYLVHLPLVGEAFFRSTATDYLALLAVPVVWFFLYRSNLGLEIIAVGEDPEMADTMGVPVFKFRYLAVIIGGGFAGAAGAHLSLAFSQLWVPGMTVGRGWIAVALVVFAQWRPSRMLVGAYLFGLLDALQLRSQSLSLALDPNAPLAGVLNPLVNTLMNPQIMSTYPYLTTIAVLSYAVIRTESVRLAVPSALLQSYNREMD.

The next 7 membrane-spanning stretches (helical) occupy residues 3–23, 32–52, 60–80, 89–109, 139–161, 193–213, and 216–236; these read FAAG…LAGL, GVLN…GFVV, WLGF…HAFL, VISG…FGSG, AFFR…WFFL, LAVI…SLAF, and LWVP…VVFA.

This sequence belongs to the binding-protein-dependent transport system permease family. In terms of assembly, the complex is composed of two ATP-binding proteins (TsgD13), two transmembrane proteins (TsgB13 and TsgC13) and a solute-binding protein (TsgA13).

Its subcellular location is the cell membrane. Part of an ABC transporter complex involved in glucose import (Potential). Responsible for the translocation of the substrate across the membrane. This chain is Putative glucose ABC transporter permease protein TsgC13 (tsgC13), found in Haloferax volcanii (strain ATCC 29605 / DSM 3757 / JCM 8879 / NBRC 14742 / NCIMB 2012 / VKM B-1768 / DS2) (Halobacterium volcanii).